The sequence spans 180 residues: Protein YOP1 (180 aa).

The residue at position 2 (Ser2) is an N-acetylserine. Positions 2 to 17 (SEYASSIHSQMKQFDT) are interaction with YIP1. Over 2–35 (SEYASSIHSQMKQFDTKYSGNRILQQLENKTNLP) the chain is Cytoplasmic. A helical transmembrane segment spans residues 36–55 (KSYLVAGLGFAYLLLIFINV). Topologically, residues 56–57 (GG) are lumenal. Residues 58–78 (VGEILSNFAGFVLPAYLSLVA) traverse the membrane as a helical segment. Over 79–88 (LKTPTSTDDT) the chain is Cytoplasmic. The helical transmembrane segment at 89-105 (QLLTYWIVFSFLSVIEF) threads the bilayer. Topologically, residues 106 to 108 (WSK) are lumenal. The helical transmembrane segment at 109–127 (AILYLIPFYWFLKTVFLIY) threads the bilayer. At 128–180 (IALPQTGGARMIYQKIVAPLTDRYILRDVSKTEKDEIRASVNEASKATGASVH) the chain is on the cytoplasmic side.

Belongs to the DP1 family. Oligomer. Interacts with YIP1.

Its subcellular location is the endoplasmic reticulum membrane. It localises to the golgi apparatus membrane. Functionally, required to generate and maintain the structure of the tubular endoplasmic reticulum network and the vacuole. Induces high curvature in membranes and causes membrane tubule formation. Involved in membrane/vesicle trafficking. This Saccharomyces cerevisiae (strain ATCC 204508 / S288c) (Baker's yeast) protein is Protein YOP1 (YOP1).